Reading from the N-terminus, the 160-residue chain is Serine-protein kinase RsbW (160 aa).

It belongs to the anti-sigma-factor family.

The enzyme catalyses L-seryl-[protein] + ATP = O-phospho-L-seryl-[protein] + ADP + H(+). It carries out the reaction L-threonyl-[protein] + ATP = O-phospho-L-threonyl-[protein] + ADP + H(+). Negative regulator of sigma-B activity. Phosphorylates and inactivates its specific antagonist protein, RsbV. Upon phosphorylation of RsbV, RsbW is released and binds to sigma-B, thereby blocking its ability to form an RNA polymerase holoenzyme (E-sigma-B). In Bacillus velezensis (strain DSM 23117 / BGSC 10A6 / LMG 26770 / FZB42) (Bacillus amyloliquefaciens subsp. plantarum), this protein is Serine-protein kinase RsbW.